The sequence spans 178 residues: ATP-dependent protease subunit HslV (178 aa).

The active site involves threonine 8. Positions 163, 166, and 169 each coordinate Na(+).

The protein belongs to the peptidase T1B family. HslV subfamily. In terms of assembly, a double ring-shaped homohexamer of HslV is capped on each side by a ring-shaped HslU homohexamer. The assembly of the HslU/HslV complex is dependent on binding of ATP.

The protein localises to the cytoplasm. The enzyme catalyses ATP-dependent cleavage of peptide bonds with broad specificity.. With respect to regulation, allosterically activated by HslU binding. Its function is as follows. Protease subunit of a proteasome-like degradation complex believed to be a general protein degrading machinery. The sequence is that of ATP-dependent protease subunit HslV from Xylella fastidiosa (strain 9a5c).